The following is a 468-amino-acid chain: 3-isopropylmalate dehydratase large subunit (468 aa).

Positions 347, 407, and 410 each coordinate [4Fe-4S] cluster. The span at 424–441 (SASSSNRNFKGRQGSPSG) shows a compositional bias: polar residues. The interval 424–443 (SASSSNRNFKGRQGSPSGRT) is disordered.

Belongs to the aconitase/IPM isomerase family. LeuC type 1 subfamily. As to quaternary structure, heterodimer of LeuC and LeuD. The cofactor is [4Fe-4S] cluster.

It catalyses the reaction (2R,3S)-3-isopropylmalate = (2S)-2-isopropylmalate. Its pathway is amino-acid biosynthesis; L-leucine biosynthesis; L-leucine from 3-methyl-2-oxobutanoate: step 2/4. Functionally, catalyzes the isomerization between 2-isopropylmalate and 3-isopropylmalate, via the formation of 2-isopropylmaleate. In Prochlorococcus marinus (strain MIT 9215), this protein is 3-isopropylmalate dehydratase large subunit.